The chain runs to 349 residues: Short-wave-sensitive opsin 1 (349 aa).

At 1-34 (MSKMPEEEEFYLFKNISSVGPWDGPQYHIAPVWA) the chain is on the extracellular side. A glycan (N-linked (GlcNAc...) asparagine) is linked at N15. Residues 35-59 (FQLQAAFMGIVFLAGLPLNSMVLVA) traverse the membrane as a helical segment. Residues 60–71 (TVRYKKLRHPLN) lie on the Cytoplasmic side of the membrane. A helical transmembrane segment spans residues 72–97 (YVLVNVSVGGFLLCIFSVLPVFVNSC). The Extracellular portion of the chain corresponds to 98–111 (NGYFVFGRHVCALE). A disulfide bridge links C108 with C185. A helical membrane pass occupies residues 112 to 131 (GFLGTVAGLVTGWSLAFLAF). Residues 132-150 (ERYIVICKPFGNFRFSSKH) lie on the Cytoplasmic side of the membrane. A helical transmembrane segment spans residues 151-174 (ALMVVLTTWTIGIGVSIPPFFGWS). The Extracellular segment spans residues 175-200 (RYIAEGLQCSCGPDWYTVGTKYRSEY). Residues 201–228 (YTWFLFIFCFIVPLSLICFSYAQLLRAL) form a helical membrane-spanning segment. At 229–250 (KAVAAQQQESATTQKAEREVSR) the chain is on the cytoplasmic side. The chain crosses the membrane as a helical span at residues 251–274 (MVVVMVGSFCVCYVPYAALAMYMV). At 275–282 (NNRNHGLD) the chain is on the extracellular side. A helical membrane pass occupies residues 283–307 (LRLVSIPAFFSKSSCIYNPIIYCFM). K294 carries the N6-(retinylidene)lysine modification. Topologically, residues 308-349 (NKQFRACIMEMVCGKAMTDESDISSSQKTEVSTVSSSQVGPN) are cytoplasmic.

The protein belongs to the G-protein coupled receptor 1 family. Opsin subfamily. Phosphorylated on some or all of the serine and threonine residues present in the C-terminal region.

It is found in the cell membrane. Its subcellular location is the photoreceptor inner segment. The protein resides in the cell projection. The protein localises to the cilium. It localises to the photoreceptor outer segment. It is found in the cytoplasm. Its subcellular location is the perinuclear region. Visual pigments are the light-absorbing molecules that mediate vision. They consist of an apoprotein, opsin, covalently linked to cis-retinal. Required for the maintenance of cone outer segment organization in the ventral retina, but not essential for the maintenance of functioning cone photoreceptors. Involved in ensuring correct abundance and localization of retinal membrane proteins. May increase spectral sensitivity in dim light. The chain is Short-wave-sensitive opsin 1 (OPN1SW) from Saimiri boliviensis boliviensis (Bolivian squirrel monkey).